The sequence spans 264 residues: MTDAALALQAENLRMTFGETKALDDVSLSVKPGEMVALIGPSGSGKSTLLRVAAALQVADAESGPVSVLGKTMQQRGKLSGRVQRNRIQLGFIFQQFNLVGRLSLFQNVLVGALGRLPTWRGVLGIFPDDVKQSAMDALTRVGVESFAARRASNLSGGQQQRGAIARALVQGAQVLFADEPIASLDPVSARKVMETLRELNKDDGLTVVVTLHQVDYAKRFCDRIVALNKGRVVYDGPADGLSRDKLIEIYGPEFETAFEGGDA.

An ABC transporter domain is found at 8–255 (LQAENLRMTF…KLIEIYGPEF (248 aa)). An ATP-binding site is contributed by 40-47 (GPSGSGKS).

Belongs to the ABC transporter superfamily. Phosphonates importer (TC 3.A.1.9.1) family. The complex is composed of two ATP-binding proteins (PhnC), two transmembrane proteins (PhnE) and a solute-binding protein (PhnD).

The protein resides in the cell inner membrane. The enzyme catalyses phosphonate(out) + ATP + H2O = phosphonate(in) + ADP + phosphate + H(+). Functionally, part of the ABC transporter complex PhnCDE involved in phosphonates import. Responsible for energy coupling to the transport system. The polypeptide is Phosphonates import ATP-binding protein PhnC (Maricaulis maris (strain MCS10) (Caulobacter maris)).